A 314-amino-acid chain; its full sequence is Vomeronasal type-1 receptor 98 (314 aa).

Over 1 to 19 (MNKDTTMYCSAYIRDVFFC) the chain is Extracellular. The helical transmembrane segment at 20–40 (EIGVGISANSCLLLFHIFMFI) threads the bilayer. Residues 41–49 (RGHRPRLTD) lie on the Cytoplasmic side of the membrane. Residues 50 to 70 (LPIGLMALIHLLMLLLAAYIA) form a helical membrane-spanning segment. Residues 71–92 (KDFFMSSGWDDITCKLFIFLHR) lie on the Extracellular side of the membrane. A disulfide bond links Cys84 and Cys171. Residues 93 to 113 (FFRSLSVCATCMLSVFQTIIL) form a helical membrane-spanning segment. Topologically, residues 114–133 (CPQSSHLAKFKPNSPYHLSC) are cytoplasmic. Residues 134–154 (FFIFMSIFYTSISSHILIAAI) traverse the membrane as a helical segment. The Extracellular portion of the chain corresponds to 155–186 (ATQNLTSVNLIYITKSCSFLPMSSSMQRTFST). The N-linked (GlcNAc...) asparagine glycan is linked to Asn158. Residues 187–207 (LLAFRNAFLIGLMGLSTCYMA) traverse the membrane as a helical segment. Residues 208–235 (TLLCRHKTRSQRLQNSKLSPKATPEQRA) lie on the Cytoplasmic side of the membrane. A helical membrane pass occupies residues 236–256 (IWTLLMFMSFFLVMSTFDSII). Residues 257 to 268 (SYSRTIFQGNPS) lie on the Extracellular side of the membrane. Residues 269–289 (LYCAQILVAHSYAVVSPMLVL) form a helical membrane-spanning segment. The Cytoplasmic portion of the chain corresponds to 290–314 (SNENRLTNPLISMYERIVRLDFLCW).

This sequence belongs to the G-protein coupled receptor 1 family.

The protein resides in the cell membrane. In terms of biological role, putative pheromone receptor implicated in the regulation of social as well as reproductive behavior. The chain is Vomeronasal type-1 receptor 98 (Vom1r98) from Rattus norvegicus (Rat).